The chain runs to 1025 residues: Dihydropyrimidine dehydrogenase [NADP(+)] (1025 aa).

Positions 69-100 (ERGALREAMRCLKCADAPCQKSCPTNLDIKSF) constitute a 4Fe-4S ferredoxin-type 1 domain. Residues C79, C82, C87, and C91 each coordinate [4Fe-4S] cluster. FAD is bound at residue V129. [4Fe-4S] cluster-binding residues include C130, C136, C140, and Q156. FAD-binding positions include 194-198 (GAGPA), 218-226 (EKQEYVGGI), R235, and L261. NADP(+)-binding positions include 340–343 (AGDT), 364–365 (RK), and R371. N6-acetyllysine is present on K384. NADP(+) is bound by residues 437–439 (AFG) and 481–487 (DVVGIAN). Residue 480–489 (GDVVGIANTT) participates in FAD binding. Residues S550 and 574–575 (KT) each bind FMN. Substrate contacts are provided by residues N609 and 668 to 670 (NLS). The active-site Proton acceptor is C671. K709 lines the FMN pocket. Residue 736 to 737 (NT) coordinates substrate. Residues G767, 793–795 (TGG), and 816–817 (CS) each bind FMN. 2 consecutive 4Fe-4S ferredoxin-type domains span residues 944–976 (VVAV…FDPE) and 978–1007 (HLPT…MVSR). 8 residues coordinate [4Fe-4S] cluster: C953, C956, C959, C963, C986, C989, C992, and C996.

Belongs to the dihydropyrimidine dehydrogenase family. As to quaternary structure, homodimer. It depends on FAD as a cofactor. FMN serves as cofactor. [4Fe-4S] cluster is required as a cofactor.

The protein resides in the cytoplasm. It catalyses the reaction 5,6-dihydrouracil + NADP(+) = uracil + NADPH + H(+). It carries out the reaction 5,6-dihydrothymine + NADP(+) = thymine + NADPH + H(+). The protein operates within amino-acid biosynthesis; beta-alanine biosynthesis. With respect to regulation, inactivated by 5-iodouracil. Its function is as follows. Involved in pyrimidine base degradation. Catalyzes the reduction of uracil and thymine. Also involved the degradation of the chemotherapeutic drug 5-fluorouracil. The protein is Dihydropyrimidine dehydrogenase [NADP(+)] (DPYD) of Bos taurus (Bovine).